Consider the following 411-residue polypeptide: Aspartokinase (411 aa).

7 to 10 (KFGG) provides a ligand contact to ATP. Substrate is bound at residue 25 to 30 (RVIEEK). Serine 41 is a binding site for ATP. Substrate contacts are provided by residues 47–49 (TDE), glutamate 74, 125–126 (LN), 150–153 (RGGS), and serine 153. ATP is bound by residues 173-174 (TD) and 179-184 (FTTDPR). ACT domains follow at residues 264-338 (VTVF…SETG) and 344-411 (IVGS…KSER). Substrate contacts are provided by residues 289–291 (NVD), glutamine 295, 355–356 (VA), 369–370 (QV), and 376–377 (SE).

This sequence belongs to the aspartokinase family. As to quaternary structure, tetramer consisting of 2 isoforms Alpha (catalytic and regulation) and of a homodimer of 2 isoforms Beta (regulation).

The catalysed reaction is L-aspartate + ATP = 4-phospho-L-aspartate + ADP. It functions in the pathway amino-acid biosynthesis; L-lysine biosynthesis via DAP pathway; (S)-tetrahydrodipicolinate from L-aspartate: step 1/4. It participates in amino-acid biosynthesis; L-methionine biosynthesis via de novo pathway; L-homoserine from L-aspartate: step 1/3. The protein operates within amino-acid biosynthesis; L-threonine biosynthesis; L-threonine from L-aspartate: step 1/5. Its activity is regulated as follows. Lysine-sensitive. In terms of biological role, catalyzes the phosphorylation of the beta-carboxyl group of aspartic acid with ATP to yield 4-phospho-L-aspartate, which is involved in the branched biosynthetic pathway leading to the biosynthesis of amino acids threonine, isoleucine and methionine. This Bacillus sp. (strain MGA3) protein is Aspartokinase (lysC).